A 492-amino-acid chain; its full sequence is Catalase isozyme 3 (492 aa).

Active-site residues include His65 and Asn138. Residue Tyr348 participates in heme binding.

It belongs to the catalase family. As to quaternary structure, homotetramer. The cofactor is heme.

It localises to the peroxisome. It catalyses the reaction 2 H2O2 = O2 + 2 H2O. Occurs in almost all aerobically respiring organisms and serves to protect cells from the toxic effects of hydrogen peroxide. This is Catalase isozyme 3 (CAT3) from Nicotiana plumbaginifolia (Leadwort-leaved tobacco).